The chain runs to 107 residues: Replication restart protein PriB (107 aa).

One can recognise an SSB domain in the interval 1–97 (MNTLELSARV…LHLQQARRIA (97 aa)).

It belongs to the PriB family. In terms of assembly, homodimer. Interacts with PriA and DnaT. Component of the replication restart primosome. Primosome assembly occurs via a 'hand-off' mechanism. PriA binds to replication forks, subsequently PriB then DnaT bind; DnaT then displaces ssDNA to generate the helicase loading substrate.

Functionally, involved in the restart of stalled replication forks, which reloads the replicative helicase on sites other than the origin of replication; the PriA-PriB pathway is the major replication restart pathway. During primosome assembly it facilitates complex formation between PriA and DnaT on DNA; stabilizes PriA on DNA. Stimulates the DNA unwinding activity of PriA helicase. In Bordetella parapertussis (strain 12822 / ATCC BAA-587 / NCTC 13253), this protein is Replication restart protein PriB.